Reading from the N-terminus, the 529-residue chain is MTPETVYLPDGQTYTVSPVFGGFGFKSNDLTHAAHFPVGWHIVVHTEEEKIVFQDGSEASVNGEGHAQPAGDDHATAVDAGDGSAQKRKKRVRPFVQPTRQNDTLFISSLSTPSTQEYGPPASPTRQIAMILWVSLYWYFHQREPSPRMSTKASHETPESAKPTGEWRITIQRDGVLRGRNLIPKLERMGLLATESTDVGTSLDDGDETWSNMFVSQRMFWQLPPNLFLFTLKPVKAPSPWPGSSGSPNDSRPGSPVAQGATHLAVRAMSPQPGVARLYNDLPGAPTPTNITAGVSTAHPITPFFSTSHLPTYYPPLTLQYTFTNNLRHPLRPKPPRMGEIFYSRFVPSVGRYLSFRVASLSPEPVPYFGPMGPNPPDHPELACLSDTQLLESWFAKPRVSAFWGKFTPEFLPTVVKLKHSFPAIGLWDGVPFGYFEIYWVKEDILGKVLGGEAGDFDRGLHVMVGEEWARGRASEWMTGLVHWCLTTDMRTMNVCLEPRIDNERILKHLDESGFGRERQLSFPHKQSC.

Disordered regions lie at residues 59 to 95 (ASVN…VRPF) and 239 to 258 (SPWP…SPVA). Substrate is bound at residue His-462. Catalysis depends on Glu-498, which acts as the Proton acceptor.

Belongs to the lysine N-acyltransferase mbtK family.

The protein resides in the cytoplasm. It is found in the cytosol. It functions in the pathway siderophore biosynthesis. In terms of biological role, acyltransferase; part of the gene cluster that mediates the biosynthesis of at least 11 siderophores, including beauverichelin A, dimerumic acid (DA), Na-dimethyl coprogen (NADC), eleutherazine B, ferricrocin (FC), fusarinine A, fusarinine C (FsC), metachelin A, mevalonolactone, rhodotorulic acid (RA) and tenellin. This cocktail of siderophores for iron metabolism is essential for virulence, and more specifically for the fungal virulence in penetrating through the host cuticle. Siderophore synthesis is also involved in conidial germination under iron-deficient conditions. SIDL contributes to partial production of ferricrocin under iron-limiting conditions via the acetylation of N(5)-hydroxyornithine. In Beauveria bassiana (strain ARSEF 2860) (White muscardine disease fungus), this protein is N5-hydroxyornithine acetylase sidL.